The primary structure comprises 258 residues: Small ribosomal subunit protein mS40 (258 aa).

A mitochondrion-targeting transit peptide spans methionine 1–lysine 35. Residues serine 38 and serine 49 each carry the phosphoserine modification. Positions arginine 218–leucine 258 are disordered. A compositionally biased stretch (pro residues) spans glycine 229–alanine 242. The span at phenylalanine 248–leucine 258 shows a compositional bias: polar residues.

This sequence belongs to the bacterial ribosomal protein bS18 family. Mitochondrion-specific ribosomal protein mS40 subfamily. As to quaternary structure, component of the mitochondrial ribosome small subunit (28S) which comprises a 12S rRNA and about 30 distinct proteins.

It is found in the mitochondrion. The sequence is that of Small ribosomal subunit protein mS40 (MRPS18B) from Macaca mulatta (Rhesus macaque).